Here is a 384-residue protein sequence, read N- to C-terminus: Protein cutoff (384 aa).

This sequence belongs to the DXO/Dom3Z family. Component of the Rhino-Deadlock-Cutoff (RDC) complex, composed of rhi/rhino, del/deadlock and cuff/cutoff. Interacts with rhi/rhino; this interaction is indirect and is mediated by del/deadlock. Interacts with del/deadlock (via C-terminal); this interaction is direct. Interacts with Rat1.

The protein resides in the cytoplasm. It is found in the nucleus. Its subcellular location is the chromosome. In terms of biological role, involved in the piRNA pathway in germline tissues. Part of the Rhino-Deadlock-Cutoff (RDC) complex that stimulates piRNA biogenesis from chromatin regions corresponding to dual-strand, but not single-stranded, piRNA clusters. Promotes transcription of long piRNA precursors by preventing termination at canonical poly(A) sites. As part of the RDC complex, is recruited to chromatin enriched in histone modification H3K9me3 and might contribute to complex interaction by binding nascent transcript nucleic acid chains. Associates with chromatin upon exposure to homologous piRNA. Suppresses cleavage at canonical poly(A) sites by blocking recruitment of the cleavage and polyadenylation specificity factor (CPSF) complex and prevents transcriptional termination by RNA polymerase II, facilitating transcriptional read-through. As part of the RDC complex, involved in suppression of splicing. Catalytically inactive, lacking 5'-3' exonuclease and pyrophosphohydrolase activities. Stabilizes uncapped piRNA precursors in the nucleus, probably by sequestering or blocking the exonuclease activity of Rat1. May also be involved in siRNA biogenesis from dual-strand piRNA clusters. The protein is Protein cutoff (cuff) of Drosophila melanogaster (Fruit fly).